A 259-amino-acid polypeptide reads, in one-letter code: MESKKPLILVSNDDGVMAKGISELVKFLRPLGEIVVMAPDSPRSGSGSALTVTHPVHYQLVKREVGLTVYKCTGTPTDCIKLALGSVLDRKPDLIVGGINHGDNSAINVHYSGTMGVVIEGCLKGIPSIGFSLCNHRPDADFEPSGPYIRKIAAMILEKGLPPLTCLNVNFPDTPNLKGVKVCEQAKGCWVNEWVTCPRLDDHNYFWLTGSFTDHELENENNDHWALENGYVAITPTTVDMTAYGFIDELNGYCQQLEF.

A divalent metal cation contacts are provided by Asp13, Asp14, Ser44, and Asn100.

Belongs to the SurE nucleotidase family. A divalent metal cation is required as a cofactor.

The protein resides in the cytoplasm. The catalysed reaction is a ribonucleoside 5'-phosphate + H2O = a ribonucleoside + phosphate. Functionally, nucleotidase that shows phosphatase activity on nucleoside 5'-monophosphates. The protein is 5'-nucleotidase SurE of Bacteroides thetaiotaomicron (strain ATCC 29148 / DSM 2079 / JCM 5827 / CCUG 10774 / NCTC 10582 / VPI-5482 / E50).